We begin with the raw amino-acid sequence, 601 residues long: Urocanate hydratase (601 aa).

NAD(+)-binding positions include 63–64 (GG) and Gln141. The insert stretch occupies residues 172 to 201 (SDRPSALLKQGLSPEGTAPGSGRSSAQVPG). The tract at residues 179–200 (LKQGLSPEGTAPGSGRSSAQVP) is disordered. NAD(+) is bound by residues 216-218 (GMG), Glu236, 282-283 (NA), 307-311 (QTSAH), 317-318 (YL), and Tyr368. Cys456 is an active-site residue. Gly538 provides a ligand contact to NAD(+).

It belongs to the urocanase family. The cofactor is NAD(+).

It is found in the cytoplasm. It carries out the reaction 4-imidazolone-5-propanoate = trans-urocanate + H2O. Its pathway is amino-acid degradation; L-histidine degradation into L-glutamate; N-formimidoyl-L-glutamate from L-histidine: step 2/3. Its function is as follows. Catalyzes the conversion of urocanate to 4-imidazolone-5-propionate. The sequence is that of Urocanate hydratase from Ralstonia nicotianae (strain ATCC BAA-1114 / GMI1000) (Ralstonia solanacearum).